The sequence spans 212 residues: Large ribosomal subunit protein uL3 (212 aa).

The disordered stretch occupies residues 127–153 (FRGGPATHGQSDRHRAPGSIGSGTTPG).

The protein belongs to the universal ribosomal protein uL3 family. Part of the 50S ribosomal subunit. Forms a cluster with proteins L14 and L19.

Functionally, one of the primary rRNA binding proteins, it binds directly near the 3'-end of the 23S rRNA, where it nucleates assembly of the 50S subunit. In Herpetosiphon aurantiacus (strain ATCC 23779 / DSM 785 / 114-95), this protein is Large ribosomal subunit protein uL3.